Reading from the N-terminus, the 366-residue chain is D-alanine--D-alanine ligase (366 aa).

The region spanning 149-358 is the ATP-grasp domain; that stretch reads KIAFDHAGLP…FSELVDTLIQ (210 aa). Residue 185–240 participates in ATP binding; the sequence is ETTLEYPCFVKPANLGSSVGIAKVRSRSELETALDNAASYDRRIIVEAGVEAKELE. 3 residues coordinate Mg(2+): Asp311, Glu325, and Asn327.

It belongs to the D-alanine--D-alanine ligase family. The cofactor is Mg(2+). Mn(2+) serves as cofactor.

It localises to the cytoplasm. The enzyme catalyses 2 D-alanine + ATP = D-alanyl-D-alanine + ADP + phosphate + H(+). It functions in the pathway cell wall biogenesis; peptidoglycan biosynthesis. Functionally, cell wall formation. The polypeptide is D-alanine--D-alanine ligase (Trichodesmium erythraeum (strain IMS101)).